A 192-amino-acid chain; its full sequence is UPF0312 protein PC1_2518 (192 aa).

The N-terminal stretch at M1–A23 is a signal peptide.

This sequence belongs to the UPF0312 family. Type 1 subfamily.

It localises to the periplasm. The sequence is that of UPF0312 protein PC1_2518 from Pectobacterium carotovorum subsp. carotovorum (strain PC1).